A 271-amino-acid polypeptide reads, in one-letter code: Transmembrane protein 33 homolog (271 aa).

Residues 1–32 (MVEIVEEPDDHQSSSTGAGSSGSSSAPPPPPP) are disordered. Low complexity predominate over residues 13-25 (SSSTGAGSSGSSS). The next 3 helical transmembrane spans lie at 56–76 (VLTV…VPAH), 125–145 (VVFL…IYAA), and 180–200 (ALGI…SLIF).

The protein belongs to the PER33/POM33 family.

Its subcellular location is the membrane. This Caenorhabditis elegans protein is Transmembrane protein 33 homolog.